Consider the following 121-residue polypeptide: MHYPTEADTSTGPNPSATSAPVRPRHVTPSLSPSSSSSPSPDSFYYFLAAAVILTAALAAALLTPNPGCTIVITGHTTIIQGSCPIPPQLVLAAHPRGLSLEQYLKFTNTLPDGSQHRSHR.

The disordered stretch occupies residues 1–40 (MHYPTEADTSTGPNPSATSAPVRPRHVTPSLSPSSSSSPS). Topologically, residues 1–43 (MHYPTEADTSTGPNPSATSAPVRPRHVTPSLSPSSSSSPSPDS) are lumenal. A compositionally biased stretch (polar residues) spans 7 to 19 (ADTSTGPNPSATS). Over residues 29 to 40 (PSLSPSSSSSPS) the composition is skewed to low complexity. The chain crosses the membrane as a helical span at residues 44–64 (FYYFLAAAVILTAALAAALLT). At 65 to 121 (PNPGCTIVITGHTTIIQGSCPIPPQLVLAAHPRGLSLEQYLKFTNTLPDGSQHRSHR) the chain is on the cytoplasmic side.

The protein belongs to the Tymovirales TGBp3 protein family.

Its subcellular location is the host endoplasmic reticulum membrane. Its function is as follows. Plays a role in viral cell-to-cell propagation, by facilitating genome transport to neighboring plant cells through plasmosdesmata. May induce the formation of granular vesicles derived from the Endoplasmic reticulum, which align on actin filaments. This is Movement protein TGBp3 from Plantago asiatica (P1AMV).